Here is a 622-residue protein sequence, read N- to C-terminus: Chaperone protein HtpG (622 aa).

Residues M1–R322 are a; substrate-binding. Positions Q323 to R539 are b. Positions V540–A622 are c.

This sequence belongs to the heat shock protein 90 family. As to quaternary structure, homodimer.

The protein localises to the cytoplasm. Functionally, molecular chaperone. Has ATPase activity. The sequence is that of Chaperone protein HtpG from Desulfotalea psychrophila (strain LSv54 / DSM 12343).